A 266-amino-acid polypeptide reads, in one-letter code: Glucosamine-6-phosphate deaminase (266 aa).

The Proton acceptor; for enolization step role is filled by Asp-72. Asp-141 acts as the For ring-opening step in catalysis. The Proton acceptor; for ring-opening step role is filled by His-143. Catalysis depends on Glu-148, which acts as the For ring-opening step.

This sequence belongs to the glucosamine/galactosamine-6-phosphate isomerase family. NagB subfamily. As to quaternary structure, homohexamer.

It catalyses the reaction alpha-D-glucosamine 6-phosphate + H2O = beta-D-fructose 6-phosphate + NH4(+). It functions in the pathway amino-sugar metabolism; N-acetylneuraminate degradation; D-fructose 6-phosphate from N-acetylneuraminate: step 5/5. Its activity is regulated as follows. Allosterically activated by N-acetylglucosamine 6-phosphate (GlcNAc6P). Functionally, catalyzes the reversible isomerization-deamination of glucosamine 6-phosphate (GlcN6P) to form fructose 6-phosphate (Fru6P) and ammonium ion. In Salmonella typhimurium (strain LT2 / SGSC1412 / ATCC 700720), this protein is Glucosamine-6-phosphate deaminase.